The primary structure comprises 317 residues: Iron-uptake system-binding protein (317 aa).

The N-terminal stretch at 1–19 (MKKISLTLLILLLALTAAA) is a signal peptide. Cys-20 carries the N-palmitoyl cysteine lipid modification. Cys-20 is lipidated: S-diacylglycerol cysteine. The region spanning 57-317 (IAITGSVESM…KAAAEKLTQN (261 aa)) is the Fe/B12 periplasmic-binding domain.

The protein belongs to the bacterial solute-binding protein 8 family. As to quaternary structure, the complex is composed of one ATP-binding protein (YusV), two transmembrane proteins (FeuB and FeuC) and a solute-binding protein (FeuA).

The protein localises to the cell membrane. It localises to the cytoplasm. The protein resides in the membrane raft. Involved in the uptake of iron. Its function is as follows. Part of the ABC transporter complex FeuABC/YusV involved in import of the catecholate siderophores bacillibactin and enterobactin. The protein is Iron-uptake system-binding protein (feuA) of Bacillus subtilis (strain 168).